The chain runs to 286 residues: Eukaryotic translation initiation factor 3 subunit J (286 aa).

Disordered stretches follow at residues Met-1 to Asp-35, Ala-141 to Phe-162, and Lys-229 to Thr-258. Acidic residues predominate over residues Trp-21 to Asp-35. Residues Asp-35–Lys-75 are a coiled coil.

The protein belongs to the eIF-3 subunit J family. As to quaternary structure, component of the eukaryotic translation initiation factor 3 (eIF-3) complex.

It is found in the cytoplasm. Its function is as follows. Component of the eukaryotic translation initiation factor 3 (eIF-3) complex, which is involved in protein synthesis of a specialized repertoire of mRNAs and, together with other initiation factors, stimulates binding of mRNA and methionyl-tRNAi to the 40S ribosome. The eIF-3 complex specifically targets and initiates translation of a subset of mRNAs involved in cell proliferation. This Debaryomyces hansenii (strain ATCC 36239 / CBS 767 / BCRC 21394 / JCM 1990 / NBRC 0083 / IGC 2968) (Yeast) protein is Eukaryotic translation initiation factor 3 subunit J.